A 242-amino-acid chain; its full sequence is Large ribosomal subunit protein uL30y (242 aa).

The protein belongs to the universal ribosomal protein uL30 family.

This chain is Large ribosomal subunit protein uL30y (RPL7B), found in Arabidopsis thaliana (Mouse-ear cress).